Here is a 901-residue protein sequence, read N- to C-terminus: HTH-type transcriptional regulator MalT (901 aa).

An ATP-binding site is contributed by 39-46 (SPAGYGKT). The HTH luxR-type domain occupies 829–894 (ELIRTSPLTQ…AAVQHAQKLL (66 aa)). The segment at residues 853 to 872 (NEQIAGELEVAATTIKTHIR) is a DNA-binding region (H-T-H motif).

It belongs to the MalT family. In terms of assembly, monomer in solution. Oligomerizes to an active state in the presence of the positive effectors ATP and maltotriose.

Activated by ATP and maltotriose, which are both required for DNA binding. Its function is as follows. Positively regulates the transcription of the maltose regulon whose gene products are responsible for uptake and catabolism of malto-oligosaccharides. Specifically binds to the promoter region of its target genes, recognizing a short DNA motif called the MalT box. The sequence is that of HTH-type transcriptional regulator MalT from Escherichia coli O127:H6 (strain E2348/69 / EPEC).